We begin with the raw amino-acid sequence, 261 residues long: tRNA pseudouridine synthase A (261 aa).

Aspartate 51 functions as the Nucleophile in the catalytic mechanism. Tyrosine 109 contacts substrate.

It belongs to the tRNA pseudouridine synthase TruA family. Homodimer.

It catalyses the reaction uridine(38/39/40) in tRNA = pseudouridine(38/39/40) in tRNA. In terms of biological role, formation of pseudouridine at positions 38, 39 and 40 in the anticodon stem and loop of transfer RNAs. The protein is tRNA pseudouridine synthase A of Idiomarina loihiensis (strain ATCC BAA-735 / DSM 15497 / L2-TR).